A 71-amino-acid polypeptide reads, in one-letter code: ADNRRPIWVMGHMVNSLAQIDEFVNLGANSIETDVSFDRNCQVLVVFDLKTGHRWQFGGITNKVLNEAAYK.

His-12 is an active-site residue. The Mg(2+) site is built by Glu-32, Asp-34, and Asp-48.

It depends on Mg(2+) as a cofactor. Post-translationally, contains 2 disulfide bonds. Expressed by the venom gland.

It localises to the secreted. The enzyme catalyses an N-(acyl)-sphingosylphosphocholine = an N-(acyl)-sphingosyl-1,3-cyclic phosphate + choline. It catalyses the reaction an N-(acyl)-sphingosylphosphoethanolamine = an N-(acyl)-sphingosyl-1,3-cyclic phosphate + ethanolamine. The catalysed reaction is a 1-acyl-sn-glycero-3-phosphocholine = a 1-acyl-sn-glycero-2,3-cyclic phosphate + choline. It carries out the reaction a 1-acyl-sn-glycero-3-phosphoethanolamine = a 1-acyl-sn-glycero-2,3-cyclic phosphate + ethanolamine. In terms of biological role, catalyzes the hydrolysis of sphingomyelin. May also act on other phosphatidyl esters. Functionally, dermonecrotic toxins cleave the phosphodiester linkage between the phosphate and headgroup of certain phospholipids (sphingolipid and lysolipid substrates), forming an alcohol (often choline) and a cyclic phosphate. This toxin acts on sphingomyelin (SM). It may also act on ceramide phosphoethanolamine (CPE), lysophosphatidylcholine (LPC) and lysophosphatidylethanolamine (LPE), but not on lysophosphatidylserine (LPS), and lysophosphatidylglycerol (LPG). It acts by transphosphatidylation, releasing exclusively cyclic phosphate products as second products. In vivo, induces dermonecrosis, but is not lethal. Induces hemolysis, vascular permeability, edema, inflammatory response, and platelet aggregation. The polypeptide is Dermonecrotic toxin LgSicTox-alphaI-Loxn-A (Loxosceles gaucho (Spider)).